The sequence spans 646 residues: Calcium-dependent protein kinase 2 (646 aa).

A lipid anchor (N-myristoyl glycine) is attached at Gly-2. Cys-5 carries S-palmitoyl cysteine lipidation. The tract at residues 27–169 is disordered; the sequence is RIGAEQASSS…HMRRVSSAGL (143 aa). A compositionally biased stretch (polar residues) spans 32–43; it reads QASSSSHGNGQV. Basic and acidic residues-rich tracts occupy residues 73-119 and 126-157; these read PETK…KREV and AKPE…EPQK. In terms of domain architecture, Protein kinase spans 186–444; it reads YSLGRKLGQG…AHQVLCHPWV (259 aa). ATP is bound by residues 192-200 and Lys-215; that span reads LGQGQFGTT. The Proton acceptor role is filled by Asp-310. Ser-350 carries the post-translational modification Phosphoserine. The interval 450–480 is autoinhibitory domain; that stretch reads APDKPLDSAVLSRMKQFSAMNKFKKMALRVI. EF-hand domains follow at residues 487-522, 523-558, 559-592, and 593-628; these read EEIA…VGAN, LKES…LNKI, ERED…EEFG, and VEDA…GSIM. Residues Asp-500, Asp-502, Ser-504, Gln-506, Glu-511, Asp-536, Asp-538, Ser-540, Thr-542, Glu-547, Asp-572, Asp-574, Ser-576, Glu-583, Asp-606, Asp-608, Asp-610, Arg-612, and Glu-617 each coordinate Ca(2+).

This sequence belongs to the protein kinase superfamily. Ser/Thr protein kinase family. CDPK subfamily. Interacts with 14-3-3 proteins.

It localises to the endoplasmic reticulum membrane. The catalysed reaction is L-seryl-[protein] + ATP = O-phospho-L-seryl-[protein] + ADP + H(+). It catalyses the reaction L-threonyl-[protein] + ATP = O-phospho-L-threonyl-[protein] + ADP + H(+). With respect to regulation, activated by calcium. Autophosphorylation may play an important role in the regulation of the kinase activity. Its function is as follows. May play a role in signal transduction pathways that involve calcium as a second messenger. The polypeptide is Calcium-dependent protein kinase 2 (CPK2) (Arabidopsis thaliana (Mouse-ear cress)).